Here is a 443-residue protein sequence, read N- to C-terminus: ATP-dependent protease ATPase subunit HslU (443 aa).

Residues I18, 60–65 (GVGKTE), D256, E321, and R393 contribute to the ATP site.

The protein belongs to the ClpX chaperone family. HslU subfamily. As to quaternary structure, a double ring-shaped homohexamer of HslV is capped on each side by a ring-shaped HslU homohexamer. The assembly of the HslU/HslV complex is dependent on binding of ATP.

Its subcellular location is the cytoplasm. ATPase subunit of a proteasome-like degradation complex; this subunit has chaperone activity. The binding of ATP and its subsequent hydrolysis by HslU are essential for unfolding of protein substrates subsequently hydrolyzed by HslV. HslU recognizes the N-terminal part of its protein substrates and unfolds these before they are guided to HslV for hydrolysis. The protein is ATP-dependent protease ATPase subunit HslU of Escherichia coli O139:H28 (strain E24377A / ETEC).